We begin with the raw amino-acid sequence, 954 residues long: Mycolic acid-containing lipids exporter MmpL11 (954 aa).

12 consecutive transmembrane segments (helical) span residues 11-31 (FRWA…YLAL), 188-208 (IVLI…LPLV), 214-234 (VVVT…SVFV), 235-255 (TSTV…FILM), 279-299 (GLAV…IYLI), 312-334 (ILAV…ATFG), 373-393 (AIAA…MVLG), 529-549 (TQPL…LVSI), 559-579 (VLMT…VFQW), 597-617 (IPPL…IFLL), 648-668 (AALI…PLVA), and 670-690 (LGVA…LVLV).

The protein localises to the cell inner membrane. Contributes to cell wall biosynthesis and biofilm formation. Transports the mycolic acid-containing lipids monomeromycolyl diacylglycerol (MMDAG) and mycolate ester wax (WE) to the bacterial surface. The chain is Mycolic acid-containing lipids exporter MmpL11 from Mycolicibacterium smegmatis (strain ATCC 700084 / mc(2)155) (Mycobacterium smegmatis).